Reading from the N-terminus, the 116-residue chain is Sperm mitochondrial-associated cysteine-rich protein (116 aa).

A run of 7 repeats spans residues 6 to 13 (KHSKCCPA), 14 to 21 (KGNQCCPP), 30 to 37 (KGNQCCPP), 38 to 45 (KQNQCCQP), 46 to 53 (KGSQCCPP), 54 to 61 (KHNHCCQP), and 62 to 68 (KPPCCIQ). Positions 6 to 68 (KHSKCCPAKG…CQPKPPCCIQ (63 aa)) are 7 X 7 (OR 8) AA approximate repeats. Positions 80 to 116 (VSPLNMESEPNSPQTQDKGCQTQQQPHSPQNESRPSK) are disordered. Positions 93–104 (QTQDKGCQTQQQ) are enriched in low complexity. Polar residues predominate over residues 105 to 116 (PHSPQNESRPSK).

Testis. Is selectively expressed in the spermatids of seminiferous tubules.

It is found in the cytoplasm. The protein resides in the mitochondrion membrane. Functionally, involved in sperm motility. Its absence is associated with genetic background dependent male infertility. Infertility may be due to reduced sperm motility in the female reproductive tract and inability to penetrate the oocyte zona pellucida. This Homo sapiens (Human) protein is Sperm mitochondrial-associated cysteine-rich protein (SMCP).